Here is a 198-residue protein sequence, read N- to C-terminus: Probable chorismate pyruvate-lyase (198 aa).

Substrate is bound by residues Arg76, Leu114, and Glu172.

The protein belongs to the UbiC family.

It is found in the cytoplasm. It carries out the reaction chorismate = 4-hydroxybenzoate + pyruvate. It functions in the pathway cofactor biosynthesis; ubiquinone biosynthesis. Removes the pyruvyl group from chorismate, with concomitant aromatization of the ring, to provide 4-hydroxybenzoate (4HB) for the ubiquinone pathway. The protein is Probable chorismate pyruvate-lyase of Bordetella avium (strain 197N).